Here is a 380-residue protein sequence, read N- to C-terminus: Queuine tRNA-ribosyltransferase (380 aa).

Aspartate 95 (proton acceptor) is an active-site residue. Residues 95 to 99, aspartate 149, glutamine 192, and glycine 219 each bind substrate; that span reads DSGGF. Positions 250–256 are RNA binding; that stretch reads GVGSPDA. Aspartate 269 (nucleophile) is an active-site residue. The RNA binding; important for wobble base 34 recognition stretch occupies residues 274-278; sequence TRIAR. Residues cysteine 307, cysteine 309, cysteine 312, and histidine 338 each contribute to the Zn(2+) site.

Belongs to the queuine tRNA-ribosyltransferase family. Homodimer. Within each dimer, one monomer is responsible for RNA recognition and catalysis, while the other monomer binds to the replacement base PreQ1. It depends on Zn(2+) as a cofactor.

It carries out the reaction 7-aminomethyl-7-carbaguanine + guanosine(34) in tRNA = 7-aminomethyl-7-carbaguanosine(34) in tRNA + guanine. The protein operates within tRNA modification; tRNA-queuosine biosynthesis. In terms of biological role, catalyzes the base-exchange of a guanine (G) residue with the queuine precursor 7-aminomethyl-7-deazaguanine (PreQ1) at position 34 (anticodon wobble position) in tRNAs with GU(N) anticodons (tRNA-Asp, -Asn, -His and -Tyr). Catalysis occurs through a double-displacement mechanism. The nucleophile active site attacks the C1' of nucleotide 34 to detach the guanine base from the RNA, forming a covalent enzyme-RNA intermediate. The proton acceptor active site deprotonates the incoming PreQ1, allowing a nucleophilic attack on the C1' of the ribose to form the product. After dissociation, two additional enzymatic reactions on the tRNA convert PreQ1 to queuine (Q), resulting in the hypermodified nucleoside queuosine (7-(((4,5-cis-dihydroxy-2-cyclopenten-1-yl)amino)methyl)-7-deazaguanosine). The sequence is that of Queuine tRNA-ribosyltransferase from Latilactobacillus sakei subsp. sakei (strain 23K) (Lactobacillus sakei subsp. sakei).